Reading from the N-terminus, the 109-residue chain is uncharacterized protein (109 aa).

Residues 42-100 (LEEKLKQEKIDRKYLAEVTNIPYTTVSRIMRAEANREFNPEIDTILKIAKYFNCTMDEV) enclose the HTH cro/C1-type domain. The segment at residues 53-72 (RKYLAEVTNIPYTTVSRIMR) is a DNA-binding region (H-T-H motif).

This is an uncharacterized protein from Rickettsia conorii (strain ATCC VR-613 / Malish 7).